The following is a 328-amino-acid chain: Transcription initiation factor IIB 4 (328 aa).

Composition is skewed to basic and acidic residues over residues 1-12 (MTNQRTTRDGSH) and 21-32 (RSRESTDEDHGC). The disordered stretch occupies residues 1–47 (MTNQRTTRDGSHGTESVPTQRSRESTDEDHGCPECNGDLVTDEDRGE). Residues 28 to 58 (EDHGCPECNGDLVTDEDRGETTCGECGLVVE) form a TFIIB-type zinc finger. 4 residues coordinate Zn(2+): Cys-32, Cys-35, Cys-50, and Cys-53. Tandem repeats lie at residues 144 to 227 (GEIE…AREL) and 238 to 319 (SYVP…EILD).

This sequence belongs to the TFIIB family.

In terms of biological role, stabilizes TBP binding to an archaeal box-A promoter. Also responsible for recruiting RNA polymerase II to the pre-initiation complex (DNA-TBP-TFIIB). This is Transcription initiation factor IIB 4 from Halobacterium salinarum (strain ATCC 700922 / JCM 11081 / NRC-1) (Halobacterium halobium).